Consider the following 720-residue polypeptide: Phosphoribosylformylglycinamidine synthase subunit PurL (720 aa).

His47 is a catalytic residue. Residues Tyr50 and Lys89 each coordinate ATP. A Mg(2+)-binding site is contributed by Glu91. Substrate-binding positions include 92–95 and Arg114; that span reads SHNH. The active-site Proton acceptor is the His93. A Mg(2+)-binding site is contributed by Asp115. Gln238 is a binding site for substrate. Mg(2+) is bound at residue Asp266. Position 310 to 312 (310 to 312) interacts with substrate; the sequence is ESQ. 2 residues coordinate ATP: Asp488 and Gly525. Asn526 contributes to the Mg(2+) binding site. Ser528 lines the substrate pocket.

Belongs to the FGAMS family. Monomer. Part of the FGAM synthase complex composed of 1 PurL, 1 PurQ and 2 PurS subunits.

It is found in the cytoplasm. The enzyme catalyses N(2)-formyl-N(1)-(5-phospho-beta-D-ribosyl)glycinamide + L-glutamine + ATP + H2O = 2-formamido-N(1)-(5-O-phospho-beta-D-ribosyl)acetamidine + L-glutamate + ADP + phosphate + H(+). The protein operates within purine metabolism; IMP biosynthesis via de novo pathway; 5-amino-1-(5-phospho-D-ribosyl)imidazole from N(2)-formyl-N(1)-(5-phospho-D-ribosyl)glycinamide: step 1/2. In terms of biological role, part of the phosphoribosylformylglycinamidine synthase complex involved in the purines biosynthetic pathway. Catalyzes the ATP-dependent conversion of formylglycinamide ribonucleotide (FGAR) and glutamine to yield formylglycinamidine ribonucleotide (FGAM) and glutamate. The FGAM synthase complex is composed of three subunits. PurQ produces an ammonia molecule by converting glutamine to glutamate. PurL transfers the ammonia molecule to FGAR to form FGAM in an ATP-dependent manner. PurS interacts with PurQ and PurL and is thought to assist in the transfer of the ammonia molecule from PurQ to PurL. The sequence is that of Phosphoribosylformylglycinamidine synthase subunit PurL from Cereibacter sphaeroides (strain ATCC 17023 / DSM 158 / JCM 6121 / CCUG 31486 / LMG 2827 / NBRC 12203 / NCIMB 8253 / ATH 2.4.1.) (Rhodobacter sphaeroides).